The primary structure comprises 1030 residues: E3 ubiquitin-protein ligase mib1 (1030 aa).

Residues 6–74 enclose the MIB/HERC2 1 domain; sequence NNRVMMEGVG…AYDVRILDSA (69 aa). Residues 80-132 form a ZZ-type zinc finger; sequence HDGTMCDTCRQQPIIGIRWKCAECTNYDLCTTCYHGDKHHLRHRFYRITTPGS. The Zn(2+) site is built by cysteine 85, cysteine 88, cysteine 100, cysteine 103, cysteine 109, cysteine 112, histidine 118, and histidine 122. The MIB/HERC2 2 domain occupies 143–221; that stretch reads SKKITARGIF…MSDLKCVQDA (79 aa). 9 ANK repeats span residues 430-460, 463-492, 496-525, 529-558, 562-591, 595-627, 631-661, 665-694, and 698-727; these read DINE…DVNG, AGHT…DLEA, DGDR…DLNA, RRQT…HPSL, EGDT…DVTI, NGFN…IVDE, DGYT…NLDV, NQQT…KLDV, and DGDT…VSKV. RING-type zinc fingers lie at residues 817–852 and 864–899; these read CMVC…LICK and CVVC…VQCR. Residues 957–986 adopt a coiled-coil conformation; sequence ALQRDKDNTNVNADVQKLQQQLQDIKEQTM. The RING-type 3 zinc finger occupies 987-1020; it reads CPVCLDRLKNMIFMCGHGTCQLCGDRMSECPICR.

As to quaternary structure, interacts with deltaA (dla) and deltaD (dld).

The protein localises to the cytoplasm. The protein resides in the cytoskeleton. Its subcellular location is the microtubule organizing center. It is found in the centrosome. It localises to the centriolar satellite. The protein localises to the cell membrane. It carries out the reaction S-ubiquitinyl-[E2 ubiquitin-conjugating enzyme]-L-cysteine + [acceptor protein]-L-lysine = [E2 ubiquitin-conjugating enzyme]-L-cysteine + N(6)-ubiquitinyl-[acceptor protein]-L-lysine.. It participates in protein modification; protein ubiquitination. In terms of biological role, E3 ubiquitin-protein ligase that mediates ubiquitination of Delta receptors, which act as ligands of Notch proteins. Positively regulates the Delta-mediated Notch signaling by ubiquitinating the intracellular domain of Delta, leading to endocytosis of Delta receptors. It thereby participates in many processes regulated by the Notch signaling pathway, such as midline cell fate specification prior to germ layer formation, patterning of sensory cell differentiation in the ear, neurogenesis of the hindbrain and commitment to a secretory fate in the intestine. Essential for early embryonic development. The polypeptide is E3 ubiquitin-protein ligase mib1 (mib1) (Danio rerio (Zebrafish)).